The following is a 542-amino-acid chain: Cytochrome P450 monooxygenase 91 (542 aa).

A signal peptide spans 1–22; the sequence is MLDILRFVLICGILWILRRVLL. N-linked (GlcNAc...) asparagine glycosylation is found at Asn-299 and Asn-392. A heme-binding site is contributed by Cys-482.

This sequence belongs to the cytochrome P450 family. It depends on heme as a cofactor.

Its pathway is secondary metabolite biosynthesis. Cytochrome P450 monooxygenase that is able to use dehydroabietic acid as a substrate for oxidation. The chain is Cytochrome P450 monooxygenase 91 from Postia placenta (strain ATCC 44394 / Madison 698-R) (Brown rot fungus).